A 407-amino-acid chain; its full sequence is Aspartokinase (407 aa).

Residue 7 to 10 coordinates ATP; that stretch reads KFGG. 25–30 contacts substrate; that stretch reads RVIEEV. Residue S41 coordinates ATP. Substrate-binding positions include 47 to 49, E74, 125 to 126, 150 to 153, and S153; these read TDE, LD, and RGGS. ATP-binding positions include 173–174 and 179–184; these read TD and FTTDPR. 2 consecutive ACT domains span residues 264 to 338 and 340 to 407; these read VTVV…LAKV and IVGS…AVRS. Residues 289–291, Q295, 351–352, 365–366, and 372–373 each bind substrate; these read NVD, VA, EI, and SE.

The protein belongs to the aspartokinase family. As to quaternary structure, tetramer consisting of 2 isoforms Alpha (catalytic and regulation) and of a homodimer of 2 isoforms Beta (regulation).

It carries out the reaction L-aspartate + ATP = 4-phospho-L-aspartate + ADP. The protein operates within amino-acid biosynthesis; L-lysine biosynthesis via DAP pathway; (S)-tetrahydrodipicolinate from L-aspartate: step 1/4. It participates in amino-acid biosynthesis; L-methionine biosynthesis via de novo pathway; L-homoserine from L-aspartate: step 1/3. Its pathway is amino-acid biosynthesis; L-threonine biosynthesis; L-threonine from L-aspartate: step 1/5. With respect to regulation, lysine-sensitive. In terms of biological role, catalyzes the phosphorylation of the beta-carboxyl group of aspartic acid with ATP to yield 4-phospho-L-aspartate, which is involved in the branched biosynthetic pathway leading to the biosynthesis of amino acids threonine, isoleucine and methionine. In Geobacillus stearothermophilus (Bacillus stearothermophilus), this protein is Aspartokinase (lysC).